A 275-amino-acid chain; its full sequence is Lycopene elongase/hydratase (275 aa).

Transmembrane regions (helical) follow at residues 13-33, 38-58, 84-104, 107-127, 134-154, 160-180, 203-223, 225-245, and 253-273; these read FWLY…TTVG, APAV…LYGI, AAVA…AAPL, EAWP…APPL, VLDS…YAGV, PLLA…FSAI, ALAY…LVDV, FGLL…LQVA, and YPAV…WGVV.

The protein belongs to the UbiA prenyltransferase family.

The protein localises to the cell membrane. The enzyme catalyses all-trans-lycopene + dimethylallyl diphosphate + H2O = dihydroisopentenyldehydrorhodopin + diphosphate. The catalysed reaction is isopentenyldehydrorhodopin + dimethylallyl diphosphate + H2O = dihydrobisanhydrobacterioruberin + diphosphate. It functions in the pathway carotenoid biosynthesis. Inhibited by bacterioopsin. Involved in the biosynthesis of the acyclic C50 carotenoid bacterioruberin (BR). Acts as a bifunctional elongase/hydratase that catalyzes the elongation of lycopene by attaching a C(5) isoprene unit at C-2, as well as the hydroxylation of the previous end of the molecule. The enzyme acts at both ends of the substrate, and catalyzes the conversion of lycopene to the C(45) intermediate dihydroisopentenyldehydrorhodopin (DH-IDR) and the conversion of isopentenyldehydrorhodopin (IDR) to the C(50) carotenoid dihydrobisanhydrobacterioruberin (DH-BABR). Can also catalyze the conversion of lycopene to tetrahydrobisanhydrobacterioruberin (TH-BABR). This chain is Lycopene elongase/hydratase, found in Halobacterium salinarum (strain ATCC 700922 / JCM 11081 / NRC-1) (Halobacterium halobium).